The primary structure comprises 219 residues: Ribose-5-phosphate isomerase A (219 aa).

Substrate is bound by residues 28–31 (SGST), 81–84 (DGAD), and 94–97 (KGGG). Glu-103 (proton acceptor) is an active-site residue. Lys-121 provides a ligand contact to substrate.

The protein belongs to the ribose 5-phosphate isomerase family. Homodimer.

It carries out the reaction aldehydo-D-ribose 5-phosphate = D-ribulose 5-phosphate. It participates in carbohydrate degradation; pentose phosphate pathway; D-ribose 5-phosphate from D-ribulose 5-phosphate (non-oxidative stage): step 1/1. In terms of biological role, catalyzes the reversible conversion of ribose-5-phosphate to ribulose 5-phosphate. In Actinobacillus succinogenes (strain ATCC 55618 / DSM 22257 / CCUG 43843 / 130Z), this protein is Ribose-5-phosphate isomerase A.